The following is a 928-amino-acid chain: Receptor-like kinase TMK4 (928 aa).

The signal sequence occupies residues 1–24 (MEAPTPLLLLVLLTTITFFTTSVA). Residues 25–472 (DDQTAMLALA…GGSSGGGGSK (448 aa)) lie on the Extracellular side of the membrane. A disulfide bond links Cys-51 and Cys-58. LRR repeat units lie at residues 61–84 (GRVT…ISTL), 85–107 (SELK…FAKL), 108–130 (SSLQ…AFAG), 132–157 (TSLQ…LVDS), 158–180 (TSLT…IFDS), 181–205 (LASL…LGKS), 207–229 (IQNL…LSSM), 230–251 (TSLS…DLSK), 252–276 (SENL…LLTL), and 278–298 (SLKN…LFSP). An N-linked (GlcNAc...) asparagine glycan is attached at Asn-144. Asn-193 carries N-linked (GlcNAc...) asparagine glycosylation. N-linked (GlcNAc...) asparagine glycosylation is present at Asn-281. 2 cysteine pairs are disulfide-bonded: Cys-310–Cys-318 and Cys-348–Cys-356. 3 LRR repeats span residues 360–383 (GKNV…AIAN), 384–407 (LTSL…ELTF), and 408–435 (MTSL…VKFS). Asn-383 is a glycosylation site (N-linked (GlcNAc...) asparagine). The tract at residues 445-465 (TNGGDGSSPGTGGASGGPGGS) is disordered. The helical transmembrane segment at 473 to 493 (VGVIVGVIVAVLVFLAILGFV) threads the bilayer. The Cytoplasmic portion of the chain corresponds to 494-928 (VYKFVMKRKY…PNTFDSADGR (435 aa)). The 281-residue stretch at 578 to 858 (FSEDNILGRG…HAVNVLGPLV (281 aa)) folds into the Protein kinase domain. ATP contacts are provided by residues 584–592 (LGRGGFGVV) and Lys-606. Asp-707 functions as the Proton acceptor in the catalytic mechanism. Composition is skewed to polar residues over residues 898–911 (FHGD…QSSI) and 918–928 (FPNTFDSADGR). The disordered stretch occupies residues 898–928 (FHGDFSYSQTQSSIPPKASGFPNTFDSADGR).

It belongs to the protein kinase superfamily. Ser/Thr protein kinase family. Interacts with BAK1 (via kinase domain), SERK4 and SERK5. Expressed in roots, leaves, stems, siliques and flowers. Ubiquitous, with a high expression in mature pollen grains and in the pericycle and the xylem vasculature of the primary and lateral roots.

It is found in the membrane. The enzyme catalyses L-seryl-[protein] + ATP = O-phospho-L-seryl-[protein] + ADP + H(+). The catalysed reaction is L-threonyl-[protein] + ATP = O-phospho-L-threonyl-[protein] + ADP + H(+). In terms of biological role, involved in auxin signal transduction and cell expansion and proliferation regulation. May be involved in brassinosteroid-mediated plant growth and development via auxin regulation. May be involved in microspore and pollen development. The polypeptide is Receptor-like kinase TMK4 (Arabidopsis thaliana (Mouse-ear cress)).